The chain runs to 431 residues: Sulfide dehydrogenase [flavocytochrome c] flavoprotein chain (431 aa).

The tat-type signal signal peptide spans 1 to 30; the sequence is MTLNRRDFIKTSGAAVAAVGILGFPHLAFG. 70–76 contacts FAD; that stretch reads YTCYLSN. A disulfide bridge connects residues C191 and C367.

Dimer of one cytochrome and one flavoprotein. Post-translationally, predicted to be exported by the Tat system. The position of the signal peptide cleavage has been experimentally proven.

Its subcellular location is the periplasm. It carries out the reaction hydrogen sulfide + 2 Fe(III)-[cytochrome c] = sulfur + 2 Fe(II)-[cytochrome c] + H(+). This Allochromatium vinosum (strain ATCC 17899 / DSM 180 / NBRC 103801 / NCIMB 10441 / D) (Chromatium vinosum) protein is Sulfide dehydrogenase [flavocytochrome c] flavoprotein chain (fccB).